We begin with the raw amino-acid sequence, 188 residues long: Elongation factor P (188 aa).

The protein belongs to the elongation factor P family.

It localises to the cytoplasm. It functions in the pathway protein biosynthesis; polypeptide chain elongation. In terms of biological role, involved in peptide bond synthesis. Stimulates efficient translation and peptide-bond synthesis on native or reconstituted 70S ribosomes in vitro. Probably functions indirectly by altering the affinity of the ribosome for aminoacyl-tRNA, thus increasing their reactivity as acceptors for peptidyl transferase. The sequence is that of Elongation factor P from Leptospira interrogans serogroup Icterohaemorrhagiae serovar copenhageni (strain Fiocruz L1-130).